A 740-amino-acid chain; its full sequence is Polyribonucleotide nucleotidyltransferase (740 aa).

Positions 496 and 502 each coordinate Mg(2+). The KH domain maps to 563-622 (PAIIRTSIHPDKIRDIIGPGGKIIKKLVEETGADIDIEDDGRVFIAAVDREKGKRALEII). An S1 motif domain is found at 632–706 (GKLYNGKVTR…QQGRLKLSKK (75 aa)). Residues 707–740 (EAMRDMGLAPAESTSEQPEKRERRPFSRPKATKE) are disordered. Residues 723-740 (QPEKRERRPFSRPKATKE) are compositionally biased toward basic and acidic residues.

The protein belongs to the polyribonucleotide nucleotidyltransferase family. Mg(2+) is required as a cofactor.

It is found in the cytoplasm. It catalyses the reaction RNA(n+1) + phosphate = RNA(n) + a ribonucleoside 5'-diphosphate. Involved in mRNA degradation. Catalyzes the phosphorolysis of single-stranded polyribonucleotides processively in the 3'- to 5'-direction. In Desulforamulus reducens (strain ATCC BAA-1160 / DSM 100696 / MI-1) (Desulfotomaculum reducens), this protein is Polyribonucleotide nucleotidyltransferase.